A 233-amino-acid polypeptide reads, in one-letter code: Large ribosomal subunit protein uL1 (233 aa).

The protein belongs to the universal ribosomal protein uL1 family. As to quaternary structure, part of the 50S ribosomal subunit.

Functionally, binds directly to 23S rRNA. The L1 stalk is quite mobile in the ribosome, and is involved in E site tRNA release. Protein L1 is also a translational repressor protein, it controls the translation of the L11 operon by binding to its mRNA. This chain is Large ribosomal subunit protein uL1, found in Geobacillus stearothermophilus (Bacillus stearothermophilus).